Here is a 254-residue protein sequence, read N- to C-terminus: MENIMNNPVIGVVMCRNRLKGHATQTLQEKYLNAIIHAGGLPIALPHALAEPSLLEQLLPKLDGIYLPGSPSNVQPHLYGENGDEPDADPERDLLSMALINAALERRIPIFAICRGLQELVVATGGSLHRKLCEQPELLEHREDPELPVEQQYAPSHEVQVEEGGLLSALLPECSNFWVNSLHGQGAKVVSPRLRVEARSPDGLVEAVSVINHPFALGVQWHPEWNSSEYALSRILFEGFITACQHHIAEKQRL.

The Glutamine amidotransferase type-1 domain occupies 16–250 (RNRLKGHATQ…ITACQHHIAE (235 aa)). Catalysis depends on cysteine 114, which acts as the Nucleophile. Catalysis depends on residues histidine 222 and glutamate 224.

It belongs to the peptidase C26 family.

The catalysed reaction is 4-(gamma-L-glutamylamino)butanoate + H2O = 4-aminobutanoate + L-glutamate. The protein operates within amine and polyamine degradation; putrescine degradation; 4-aminobutanoate from putrescine: step 4/4. In terms of biological role, involved in the breakdown of putrescine via hydrolysis of the gamma-glutamyl linkage of gamma-glutamyl-gamma-aminobutyrate. This chain is Gamma-glutamyl-gamma-aminobutyrate hydrolase (puuD), found in Escherichia coli O157:H7.